Reading from the N-terminus, the 214-residue chain is Small ribosomal subunit protein uS5 (214 aa).

Positions 55–118 (LKYERLDVGI…RNAKLNITPV (64 aa)) constitute an S5 DRBM domain.

It belongs to the universal ribosomal protein uS5 family. As to quaternary structure, part of the 30S ribosomal subunit. Contacts protein S4.

Its function is as follows. With S4 and S12 plays an important role in translational accuracy. In Staphylothermus marinus (strain ATCC 43588 / DSM 3639 / JCM 9404 / F1), this protein is Small ribosomal subunit protein uS5.